The following is a 524-amino-acid chain: Thioredoxin reductase 2, mitochondrial (524 aa).

The N-terminal 34 residues, 1 to 34 (MVAAMVAALRGPSRRFRPRTRALTRGTRGAASAA), are a transit peptide targeting the mitochondrion. FAD is bound at residue 41–70 (DLLVIGGGSGGLACAKEAAQLGKKVAVADY). An N6-succinyllysine modification is found at Lys-79. The cysteines at positions 86 and 91 are disulfide-linked. Lys-175 and Lys-329 each carry N6-succinyllysine. His-497 acts as the Proton acceptor in catalysis. A cross-link (cysteinyl-selenocysteine (Cys-Sec)) is located at residues 522 to 523 (CU). Residue Sec-523 is a non-standard amino acid, selenocysteine.

This sequence belongs to the class-I pyridine nucleotide-disulfide oxidoreductase family. As to quaternary structure, homodimer. It depends on FAD as a cofactor. As to expression, expressed in liver, heart, testis and kidney.

Its subcellular location is the mitochondrion. It carries out the reaction [thioredoxin]-dithiol + NADP(+) = [thioredoxin]-disulfide + NADPH + H(+). Involved in the control of reactive oxygen species levels and the regulation of mitochondrial redox homeostasis. Maintains thioredoxin in a reduced state. May play a role in redox-regulated cell signaling. The protein is Thioredoxin reductase 2, mitochondrial of Mus musculus (Mouse).